The chain runs to 85 residues: NAD(P)H-quinone oxidoreductase subunit L (85 aa).

Transmembrane regions (helical) follow at residues 17–37 and 54–74; these read IVAVLYLGLSLLYLLIIPGFV and AFMYFLMFFFFPGVLLLSPFL.

The protein belongs to the complex I NdhL subunit family. As to quaternary structure, NDH-1 can be composed of about 15 different subunits; different subcomplexes with different compositions have been identified which probably have different functions.

It is found in the cellular thylakoid membrane. The enzyme catalyses a plastoquinone + NADH + (n+1) H(+)(in) = a plastoquinol + NAD(+) + n H(+)(out). It carries out the reaction a plastoquinone + NADPH + (n+1) H(+)(in) = a plastoquinol + NADP(+) + n H(+)(out). Functionally, NDH-1 shuttles electrons from an unknown electron donor, via FMN and iron-sulfur (Fe-S) centers, to quinones in the respiratory and/or the photosynthetic chain. The immediate electron acceptor for the enzyme in this species is believed to be plastoquinone. Couples the redox reaction to proton translocation, and thus conserves the redox energy in a proton gradient. Cyanobacterial NDH-1 also plays a role in inorganic carbon-concentration. This is NAD(P)H-quinone oxidoreductase subunit L from Crocosphaera subtropica (strain ATCC 51142 / BH68) (Cyanothece sp. (strain ATCC 51142)).